Reading from the N-terminus, the 224-residue chain is Cytidylate kinase (224 aa).

Residue 10–18 (GPSGVGKGT) coordinates ATP.

It belongs to the cytidylate kinase family. Type 1 subfamily.

It is found in the cytoplasm. It carries out the reaction CMP + ATP = CDP + ADP. It catalyses the reaction dCMP + ATP = dCDP + ADP. The protein is Cytidylate kinase of Haemophilus ducreyi (strain 35000HP / ATCC 700724).